Reading from the N-terminus, the 224-residue chain is Cytidylate kinase (224 aa).

Residue 11 to 19 (GPAAAGKST) coordinates ATP.

Belongs to the cytidylate kinase family. Type 1 subfamily.

Its subcellular location is the cytoplasm. It carries out the reaction CMP + ATP = CDP + ADP. The enzyme catalyses dCMP + ATP = dCDP + ADP. This is Cytidylate kinase from Listeria monocytogenes serovar 1/2a (strain ATCC BAA-679 / EGD-e).